A 366-amino-acid polypeptide reads, in one-letter code: Nitronate monooxygenase (366 aa).

Residues Asn74, Gln181, Gly186, Gly223, and Gln242–Thr245 each bind FMN.

The protein belongs to the nitronate monooxygenase family. NMO class I subfamily. The cofactor is FMN.

It catalyses the reaction 3 propionate 3-nitronate + 3 O2 + H2O = 3 3-oxopropanoate + 2 nitrate + nitrite + H2O2 + 3 H(+). Nitronate monooxygenase that uses molecular oxygen to catalyze the oxidative denitrification of alkyl nitronates. Acts on propionate 3-nitronate (P3N), the presumed physiological substrate. Is likely involved in the degradation of P3N, that allows B.phytofirmans PsJN to grow on 3-nitropropionate/P3N as the sole source of nitrogen and carbon. Also probably functions in the detoxification of P3N, a metabolic poison produced by plants and fungi as a defense mechanism. Cannot oxidize nitroalkanes such as 3-nitropropionate, nitroethane, or 1-nitropropane. This Paraburkholderia phytofirmans (strain DSM 17436 / LMG 22146 / PsJN) (Burkholderia phytofirmans) protein is Nitronate monooxygenase.